The chain runs to 284 residues: Aminoglycoside 6-adenylyltransferase (284 aa).

Homodimer.

It is found in the cytoplasm. It carries out the reaction streptomycin + ATP = 6-O-adenylylstreptomycin + diphosphate. The enzyme catalyses streptomycin + GTP = 6-O-guanylylstreptomycin + diphosphate. The catalysed reaction is streptidine + ATP = 6-O-adenylylstreptidine + diphosphate. Its function is as follows. Mediates bacterial resistance to streptomycin. Adenylates streptomycin on the O-6 residue. Adenylates streptidine on the O-6 residue. Does not act on spectinomycin, neomycin-B or kanamycin. Specific for ATP and GTP nucleotides incorporating a purine ring. No reaction with CTP or UTP. The polypeptide is Aminoglycoside 6-adenylyltransferase (Bacillus subtilis (strain 168)).